The chain runs to 183 residues: Small ribosomal subunit protein uS4c (183 aa).

Residues 82 to 143 (MRLDNILFRL…KQRSKALIQN (62 aa)) form the S4 RNA-binding domain.

It belongs to the universal ribosomal protein uS4 family. In terms of assembly, part of the 30S ribosomal subunit. Contacts protein S5. The interaction surface between S4 and S5 is involved in control of translational fidelity.

It is found in the plastid. It localises to the chloroplast. Its function is as follows. One of the primary rRNA binding proteins, it binds directly to 16S rRNA where it nucleates assembly of the body of the 30S subunit. With S5 and S12 plays an important role in translational accuracy. In Sparaxis sp. (strain Lejeune 1997), this protein is Small ribosomal subunit protein uS4c (rps4).